Here is a 426-residue protein sequence, read N- to C-terminus: UDP-N-acetylglucosamine 1-carboxyvinyltransferase (426 aa).

22 to 23 (KN) lines the phosphoenolpyruvate pocket. A UDP-N-acetyl-alpha-D-glucosamine-binding site is contributed by Arg-94. The Proton donor role is filled by Cys-118. Cys-118 carries the 2-(S-cysteinyl)pyruvic acid O-phosphothioketal modification. Residues 123-127 (RPVDL), Asp-309, and Ile-331 contribute to the UDP-N-acetyl-alpha-D-glucosamine site.

The protein belongs to the EPSP synthase family. MurA subfamily.

The protein resides in the cytoplasm. The enzyme catalyses phosphoenolpyruvate + UDP-N-acetyl-alpha-D-glucosamine = UDP-N-acetyl-3-O-(1-carboxyvinyl)-alpha-D-glucosamine + phosphate. Its pathway is cell wall biogenesis; peptidoglycan biosynthesis. In terms of biological role, cell wall formation. Adds enolpyruvyl to UDP-N-acetylglucosamine. The sequence is that of UDP-N-acetylglucosamine 1-carboxyvinyltransferase from Paracoccus denitrificans (strain Pd 1222).